A 268-amino-acid polypeptide reads, in one-letter code: GTP cyclohydrolase III (268 aa).

It belongs to the archaeal-type GTP cyclohydrolase family. As to quaternary structure, homotrimer. Requires Mg(2+) as cofactor.

The catalysed reaction is GTP + 3 H2O = 2-amino-5-formylamino-6-(5-phospho-D-ribosylamino)pyrimidin-4(3H)-one + 2 phosphate + 2 H(+). Its function is as follows. Catalyzes the formation of 2-amino-5-formylamino-6-ribofuranosylamino-4(3H)-pyrimidinone ribonucleotide monophosphate and inorganic phosphate from GTP. Also has an independent pyrophosphate phosphohydrolase activity. The polypeptide is GTP cyclohydrolase III (gch3) (Methanocaldococcus jannaschii (strain ATCC 43067 / DSM 2661 / JAL-1 / JCM 10045 / NBRC 100440) (Methanococcus jannaschii)).